The primary structure comprises 36 residues: Protein YibY (36 aa).

The polypeptide is Protein YibY (Escherichia coli (strain K12)).